Reading from the N-terminus, the 409-residue chain is Epoxyqueuosine reductase (409 aa).

The segment at 1–23 (MDRNPELAIADARPSQDGRAAPS) is disordered. Asp178 (proton donor) is an active-site residue. A 4Fe-4S ferredoxin-type domain is found at 232 to 261 (AAPETPGAHCGSCTRCLGACPTGAIVAPYR). Cys241, Cys244, Cys247, Cys251, Cys267, Cys294, Cys297, and Cys301 together coordinate [4Fe-4S] cluster.

This sequence belongs to the QueG family. In terms of assembly, monomer. The cofactor is cob(II)alamin. Requires [4Fe-4S] cluster as cofactor.

The protein localises to the cytoplasm. It carries out the reaction epoxyqueuosine(34) in tRNA + AH2 = queuosine(34) in tRNA + A + H2O. It functions in the pathway tRNA modification; tRNA-queuosine biosynthesis. Catalyzes the conversion of epoxyqueuosine (oQ) to queuosine (Q), which is a hypermodified base found in the wobble positions of tRNA(Asp), tRNA(Asn), tRNA(His) and tRNA(Tyr). This is Epoxyqueuosine reductase from Burkholderia pseudomallei (strain K96243).